A 315-amino-acid chain; its full sequence is Manganese-dependent 2,3-dihydroxybiphenyl 1,2-dioxygenase (315 aa).

VOC domains follow at residues 7–121 (KFGH…IYYD) and 150–273 (RIDH…LFSG). Residues His-153, His-216, and Glu-269 each contribute to the Mn(2+) site.

It belongs to the extradiol ring-cleavage dioxygenase family. As to quaternary structure, homotetramer. Mn(2+) is required as a cofactor.

It carries out the reaction biphenyl-2,3-diol + O2 = 2-hydroxy-6-oxo-6-phenylhexa-2,4-dienoate + H(+). Its pathway is xenobiotic degradation; biphenyl degradation; 2-hydroxy-2,4-pentadienoate and benzoate from biphenyl: step 3/4. Its function is as follows. Catalyzes the meta-cleavage of the hydroxylated biphenyl ring. The enzyme can oxidize a wide range of substrates, and the substrate preference order is 2,3-dihydroxybiphenyl &gt; 3-methylcatechol &gt; catechol &gt; 4-methylcatechol &gt; 4-chlorocatechol. The sequence is that of Manganese-dependent 2,3-dihydroxybiphenyl 1,2-dioxygenase (bphC) from Geobacillus genomosp. 3.